Here is a 155-residue protein sequence, read N- to C-terminus: Mitochondrial import protein 1 (155 aa).

This sequence belongs to the MIM1 family.

The protein localises to the mitochondrion outer membrane. In terms of biological role, required for the assembly of the TOM (translocase of outer membrane) receptor complex, which is responsible for the recognition and translocation of cytosolically synthesized mitochondrial preproteins. This chain is Mitochondrial import protein 1, found in Eremothecium gossypii (strain ATCC 10895 / CBS 109.51 / FGSC 9923 / NRRL Y-1056) (Yeast).